Here is a 68-residue protein sequence, read N- to C-terminus: Small ribosomal subunit protein bS21 (68 aa).

Belongs to the bacterial ribosomal protein bS21 family.

This is Small ribosomal subunit protein bS21 from Endomicrobium trichonymphae.